The sequence spans 389 residues: Ribosomal RNA large subunit methyltransferase M (389 aa).

The span at 1-13 (MIGNARMSQKYPT) shows a compositional bias: polar residues. Residues 1 to 24 (MIGNARMSQKYPTSSSRKRSPLSS) form a disordered region. Residues Ser214, 247-250 (APGG), Asp266, Asp286, and Asp302 each bind S-adenosyl-L-methionine. Catalysis depends on Lys331, which acts as the Proton acceptor.

This sequence belongs to the class I-like SAM-binding methyltransferase superfamily. RNA methyltransferase RlmE family. RlmM subfamily. As to quaternary structure, monomer.

The protein localises to the cytoplasm. The enzyme catalyses cytidine(2498) in 23S rRNA + S-adenosyl-L-methionine = 2'-O-methylcytidine(2498) in 23S rRNA + S-adenosyl-L-homocysteine + H(+). Functionally, catalyzes the 2'-O-methylation at nucleotide C2498 in 23S rRNA. The sequence is that of Ribosomal RNA large subunit methyltransferase M from Hahella chejuensis (strain KCTC 2396).